The following is a 372-amino-acid chain: Hydrogenase-1 small chain (372 aa).

The tat-type signal signal peptide spans 1-45; it reads MNNEETFYQAMRRQGVTRRSFLKYCSLAATSLGLGAGMAPKIAWA. The Periplasmic portion of the chain corresponds to 46-325; the sequence is LENKPRIPVV…PQMGTHSTAD (280 aa). [4Fe-4S] cluster-binding residues include Cys-62, Cys-65, Cys-160, Cys-194, His-232, Cys-235, Cys-260, and Cys-266. [3Fe-4S] cluster contacts are provided by Cys-275, Cys-294, and Cys-297. A helical transmembrane segment spans residues 326–346; that stretch reads TVGLTALGVVAAAVGVHAVAS. The interval 346 to 372 is disordered; that stretch reads SSVDQRRRHNQQPTETEHQPGNEDKQA. Residues 347-372 lie on the Cytoplasmic side of the membrane; the sequence is SVDQRRRHNQQPTETEHQPGNEDKQA. The span at 360 to 372 shows a compositional bias: basic and acidic residues; sequence ETEHQPGNEDKQA.

This sequence belongs to the [NiFe]/[NiFeSe] hydrogenase small subunit family. Heterodimer of a large and a small subunit. [4Fe-4S] cluster serves as cofactor. [3Fe-4S] cluster is required as a cofactor. Predicted to be exported by the Tat system. The position of the signal peptide cleavage has not been experimentally proven.

The protein localises to the cell inner membrane. The catalysed reaction is H2 + A = AH2. In terms of biological role, this is one of three S.flexneri hydrogenases synthesized in response to different physiological conditions. HYD1 is believed to have a role in hydrogen cycling during fermentative growth. The protein is Hydrogenase-1 small chain (hyaA) of Shigella flexneri.